The sequence spans 330 residues: Tryptophan--tRNA ligase (330 aa).

ATP-binding positions include 10–12 (QTT) and 18–19 (GN). The 'HIGH' region signature appears at 11 to 19 (TTGALHLGN). Residue Asp134 participates in L-tryptophan binding. ATP contacts are provided by residues 146-148 (GED), Ile186, and 195-199 (KMSKS). A 'KMSKS' region motif is present at residues 195–199 (KMSKS).

The protein belongs to the class-I aminoacyl-tRNA synthetase family. As to quaternary structure, homodimer.

It is found in the cytoplasm. It catalyses the reaction tRNA(Trp) + L-tryptophan + ATP = L-tryptophyl-tRNA(Trp) + AMP + diphosphate + H(+). In terms of biological role, catalyzes the attachment of tryptophan to tRNA(Trp). The sequence is that of Tryptophan--tRNA ligase from Rickettsia prowazekii (strain Madrid E).